Reading from the N-terminus, the 75-residue chain is Small ribosomal subunit protein bS16c (75 aa).

The protein belongs to the bacterial ribosomal protein bS16 family.

Its subcellular location is the plastid. The protein localises to the chloroplast. In Cyanidioschyzon merolae (strain NIES-3377 / 10D) (Unicellular red alga), this protein is Small ribosomal subunit protein bS16c.